Here is a 91-residue protein sequence, read N- to C-terminus: Small ribosomal subunit protein bS20 (91 aa).

Residues 1–23 are disordered; the sequence is MANTSSAKKATRKIARRTEVNKA.

It belongs to the bacterial ribosomal protein bS20 family.

Functionally, binds directly to 16S ribosomal RNA. This is Small ribosomal subunit protein bS20 from Rhizobium rhizogenes (strain K84 / ATCC BAA-868) (Agrobacterium radiobacter).